The primary structure comprises 629 residues: Probable indole-3-acetic acid-amido synthetase GH3.4 (629 aa).

The protein belongs to the IAA-amido conjugating enzyme family. Expressed in flowers.

Its function is as follows. May catalyze the synthesis of indole-3-acetic acid (IAA)-amino acid conjugates, providing a mechanism for the plant to cope with the presence of excess auxin. The polypeptide is Probable indole-3-acetic acid-amido synthetase GH3.4 (GH3.4) (Oryza sativa subsp. japonica (Rice)).